Reading from the N-terminus, the 319-residue chain is MDLLFLGTSAGVPTKARNVSATAVIEASGSHWYLVDCGEGTQHRLLHTPLSIRDLRAIFITHVHGDHCFGLPGLLASAGMSGRTQPLEVILPAVLHDWVRQGLVASDTFLPFELRLLPVEALIAWRSETLQVTTVQLSHRVPSVGFVFTEINPEPRLDIQRLDAEGIPRGPLWGELAKGLTVTFNGQLLNGNDYLRPSRPPQRVIVCGDNDKPALLAAVARGADVLVHEATFTQAVVERTGGTFGHSTAAEVARFAEAAGVRNLVLTHFSARYQNDPRRSPHIDTVRDEALAHYSGQLTLAQDLQRYHLGRNGLLEASA.

Zn(2+)-binding residues include His62, His64, Asp66, His67, His139, Asp209, and His268. Asp66 acts as the Proton acceptor in catalysis.

This sequence belongs to the RNase Z family. Homodimer. The cofactor is Zn(2+).

The catalysed reaction is Endonucleolytic cleavage of RNA, removing extra 3' nucleotides from tRNA precursor, generating 3' termini of tRNAs. A 3'-hydroxy group is left at the tRNA terminus and a 5'-phosphoryl group is left at the trailer molecule.. Functionally, zinc phosphodiesterase, which displays some tRNA 3'-processing endonuclease activity. Probably involved in tRNA maturation, by removing a 3'-trailer from precursor tRNA. In Pseudomonas putida (strain ATCC 700007 / DSM 6899 / JCM 31910 / BCRC 17059 / LMG 24140 / F1), this protein is Ribonuclease Z.